The chain runs to 291 residues: Tyramine--L-glutamate ligase (291 aa).

An ATP-grasp domain is found at 104–274 (KYPVKNLGCS…LAELLIKNAN (171 aa)). Residue 131–176 (KDYVKTPKTFKPKKYVIKKIDGCGGKFNLFDENFLIQEFVEGESLS) coordinates ATP. D236, E247, and N249 together coordinate Mg(2+). D236, E247, and N249 together coordinate Mn(2+).

Mg(2+) is required as a cofactor. Mn(2+) serves as cofactor.

The enzyme catalyses tyramine + L-glutamate + ATP = gamma-L-glutamyltyramine + ADP + phosphate + H(+). It participates in cofactor biosynthesis; methanofuran biosynthesis. In terms of biological role, catalyzes the formation of an amide bond between tyramine and the gamma carboxy group of L-glutamate. The enzyme also accepts phenylethylamine in vitro. The polypeptide is Tyramine--L-glutamate ligase (Methanocaldococcus fervens (strain DSM 4213 / JCM 15782 / AG86) (Methanococcus fervens)).